Reading from the N-terminus, the 79-residue chain is DNA-directed RNA polymerase subunit omega (79 aa).

Belongs to the RNA polymerase subunit omega family. As to quaternary structure, the RNAP catalytic core consists of 2 alpha, 1 beta, 1 beta' and 1 omega subunit. When a sigma factor is associated with the core the holoenzyme is formed, which can initiate transcription.

The enzyme catalyses RNA(n) + a ribonucleoside 5'-triphosphate = RNA(n+1) + diphosphate. Its function is as follows. Promotes RNA polymerase assembly. Latches the N- and C-terminal regions of the beta' subunit thereby facilitating its interaction with the beta and alpha subunits. This chain is DNA-directed RNA polymerase subunit omega, found in Thermotoga neapolitana (strain ATCC 49049 / DSM 4359 / NBRC 107923 / NS-E).